A 340-amino-acid polypeptide reads, in one-letter code: Nucleoid-associated protein PSPA7_4451 (340 aa).

This sequence belongs to the YejK family.

The protein localises to the cytoplasm. Its subcellular location is the nucleoid. The protein is Nucleoid-associated protein PSPA7_4451 of Pseudomonas paraeruginosa (strain DSM 24068 / PA7) (Pseudomonas aeruginosa (strain PA7)).